A 22-amino-acid polypeptide reads, in one-letter code: Mu-conotoxin TIIIA (22 aa).

3 cysteine pairs are disulfide-bonded: Cys-4–Cys-16, Cys-5–Cys-21, and Cys-11–Cys-22. A 4-hydroxyproline mark is found at Pro-8 and Pro-18. Residue Cys-22 is modified to Cysteine amide.

This sequence belongs to the conotoxin M superfamily. As to expression, expressed by the venom duct.

It localises to the secreted. Functionally, mu-conotoxins block voltage-gated sodium channels (Nav). This synthetic toxin reversibly and potently blocks rNav1.4/SCN4A (IC(50) is 9 nM) and rNav1.2/SCN2A (IC(50) is 40 nM). It also moderately blocks rNav1.1/SCN1A, rNav1.3/SCN3A, and rNav1.6/SCN8A. The block of SCN1A and SCN2A is modified when beta-subunits are coexpressed with alpha subunits. Hence, blocks of channels containing beta-1 and beta-3 subunits are more potent (compared to channels without beta subunits), whereas blocks of channels containing beta-2 and beta-4 subunits are less potent (compared to channels without beta subunits). The protein is Mu-conotoxin TIIIA of Conus tulipa (Fish-hunting cone snail).